The chain runs to 247 residues: Nodulation protein H (247 aa).

Residues 1-17 (MTHSTLPPQPFAILAMP) are hydrophobic.

Its function is as follows. Required for the formation of sulfated nod factor. Proposed to transfer activated sulfate (PAPS) to a N-acetylglucosamine of the nod factor. The chain is Nodulation protein H (nodH) from Rhizobium meliloti (strain 1021) (Ensifer meliloti).